The following is a 156-amino-acid chain: Small ribosomal subunit protein uS7 (156 aa).

The protein belongs to the universal ribosomal protein uS7 family. In terms of assembly, part of the 30S ribosomal subunit. Contacts proteins S9 and S11.

Functionally, one of the primary rRNA binding proteins, it binds directly to 16S rRNA where it nucleates assembly of the head domain of the 30S subunit. Is located at the subunit interface close to the decoding center, probably blocks exit of the E-site tRNA. This Bifidobacterium longum (strain NCC 2705) protein is Small ribosomal subunit protein uS7.